We begin with the raw amino-acid sequence, 95 residues long: uncharacterized protein (95 aa).

Residues 27-47 traverse the membrane as a helical segment; the sequence is SFGLAIIGILLIACEIILFLT.

It localises to the membrane. This is an uncharacterized protein from Homo sapiens (Human).